The chain runs to 646 residues: MIKITFPDGSVREYNEGVNGLQIAESISSRLAQDVLACGVNGETYDLGRPINEDADFVLYKWDDEEGKHAFWHTSAHLLAEALQELYPGIQFGIGPAIENGFYYDVDPGEAVIKESDLPAIEAKMLELSAKKDAVVRESISKTDALKMFGDRGETYKCELISELEDGHITTYTQGAFTDLCRGPHLMTTAPIKAIKLTTVAGAYWRGHEDRKMLTRIYGITFPKKKMLDEYLVLLEEAKKRDHRKIGKEMQLFMFSETVGKGLPMWLPKGTALRLRLQEFLRRIQTRYDYQEVITPPIGNKLLYVTSGHYAKYGKDAFQPIHTPEEGEEYFLKPMNCPHHCEIYKNFPRSYKDLPLRIAEFGTVCRYEQSGELHGLTRVRSFTQDDAHIFCRPDQVKDEFLRVMDIISIVFRSMNFQNFEAQISLRDKVNREKYIGSDDNWEKAEQAIIEACEEKGLPAKIEYGEAAFYGPKLDFMVKDAIGRRWQLGTIQVDYNLPERFELEYMGSDNQKHRPVMIHRAPFGSMERFVAVLIEHTAGKFPLWLTPDQVAILPISEKFNEYAEQVKMYLKMHEIRAIVDDRNEKIGRKIRDNEMKRIPYMLIVGEKEAENGEVSVRRQGEGDKGTMKYEEFAKILNEEVQNMINKW.

The TGS domain maps to 1–61 (MIKITFPDGS…NEDADFVLYK (61 aa)). The tract at residues 242-541 (DHRKIGKEMQ…LIEHTAGKFP (300 aa)) is catalytic. Residues Cys-337, His-388, and His-518 each contribute to the Zn(2+) site.

This sequence belongs to the class-II aminoacyl-tRNA synthetase family. As to quaternary structure, homodimer. It depends on Zn(2+) as a cofactor.

It is found in the cytoplasm. The enzyme catalyses tRNA(Thr) + L-threonine + ATP = L-threonyl-tRNA(Thr) + AMP + diphosphate + H(+). Its function is as follows. Catalyzes the attachment of threonine to tRNA(Thr) in a two-step reaction: L-threonine is first activated by ATP to form Thr-AMP and then transferred to the acceptor end of tRNA(Thr). Also edits incorrectly charged L-seryl-tRNA(Thr). In Bacteroides thetaiotaomicron (strain ATCC 29148 / DSM 2079 / JCM 5827 / CCUG 10774 / NCTC 10582 / VPI-5482 / E50), this protein is Threonine--tRNA ligase.